The primary structure comprises 301 residues: uncharacterized protein (301 aa).

Positions 146, 148, and 177 each coordinate a divalent metal cation.

Belongs to the FAH family.

This is an uncharacterized protein from Staphylococcus epidermidis (strain ATCC 12228 / FDA PCI 1200).